The primary structure comprises 752 residues: Complement C2 (752 aa).

Positions 1–20 (MGPLMVLFCLLFLYPGLADS) are cleaved as a signal peptide. 3 Sushi domains span residues 22–86 (PSCP…VCKP), 87–146 (VRCP…VCDN), and 149–206 (GHCP…ICRQ). Intrachain disulfides connect C24–C64, C51–C84, C89–C131, C117–C144, C151–C191, and C177–C204. An N-linked (GlcNAc...) asparagine glycan is attached at N29. N112 is a glycosylation site (N-linked (GlcNAc...) asparagine). The region spanning 254-452 (NLYLLLDCSQ…KALHQVFEHM (199 aa)) is the VWFA domain. The MIDAS-like motif signature appears at 260-264 (DCSQS). Residues S262 and S264 each contribute to the Mg(2+) site. Mn(2+) contacts are provided by S262 and S264. 2 N-linked (GlcNAc...) asparagine glycosylation sites follow: N290 and N333. A Mg(2+)-binding site is contributed by T337. Mn(2+) is bound at residue T337. Intrachain disulfides connect C463–C581, C492–C508, and C584–C600. In terms of domain architecture, Peptidase S1 spans 464–744 (GVGNMSANAS…MQPWLRQHLG (281 aa)). N-linked (GlcNAc...) asparagine glycans are attached at residues N467 and N471. Residues H507 and D561 each act as charge relay system in the active site. N621 carries N-linked (GlcNAc...) asparagine glycosylation. 2 disulfide bridges follow: C638-C665 and C675-C705. Residue N651 is glycosylated (N-linked (GlcNAc...) (complex) asparagine). Residue S679 is the Charge relay system of the active site.

It belongs to the peptidase S1 family. As to quaternary structure, serine protease component of the C3 convertase, also named C4bC2b, composed of the serine protease complement C2b and complement C4b. Serine protease component of the C5 convertase, also named C4bC2bC3b, composed of the serine protease complement C2b, complement C3b, as well as complement C4b. (Microbial infection) Interacts with Schistosoma haematobium TOR (via N-terminal extracellular domain). This results in inhibition of the classical and lectin pathway of complement activation, probably due to interference with binding of C2a to C4b such that C3 convertase cannot be formed. This infers resistance to complement-mediated cell lysis, allowing parasite survival and infection. Mg(2+) serves as cofactor. Mn(2+) is required as a cofactor. In terms of processing, cleaved and activated by different proteases depending on the complement pathway to generate complement C2a and serine protease complement C2b chains. Cleaved and activated by C1S following activation by the classical complement system. Cleaved and activated by MASP2 following activation by the lectin complement system. Cleaved and activated by GZMK following activation by the GZMK complement system.

Its subcellular location is the secreted. It localises to the cell surface. It carries out the reaction Selective cleavage of Arg-|-Ser bond in complement component C3 alpha-chain to form C3a and C3b, and Arg-|-Xaa bond in complement component C5 alpha-chain to form C5a and C5b.. In terms of biological role, precursor of the catalytic component of the C3 and C5 convertase complexes, which are part of the complement pathway, a cascade of proteins that leads to phagocytosis and breakdown of pathogens and signaling that strengthens the adaptive immune system. Component C2 is part of the classical, lectin and GZMK complement systems. Its function is as follows. Catalytic component of the complement C3 and C5 convertase complexes. Following complement activation, recruited to the surface of pathogens by complement C4b opsonin to form the C3 convertase, or C3b and C4b opsonins to form the C5 convertase. As part of the C3 convertase, cleaves and activate C3 into C3a anaphylatoxin and C3b opsonin, the next components of the complement pathways. As part of the C5 convertase, cleaves and activate C5 into C5a anaphylatoxin and C5b component of the membrane attack complex. The chain is Complement C2 from Homo sapiens (Human).